Here is a 294-residue protein sequence, read N- to C-terminus: Protoheme IX farnesyltransferase (294 aa).

9 helical membrane-spanning segments follow: residues L8–A28, Y35–L55, I81–L101, V107–W127, I133–A153, L163–L183, M209–M226, S230–Y252, and F266–L286.

The protein belongs to the UbiA prenyltransferase family. Protoheme IX farnesyltransferase subfamily.

Its subcellular location is the cell inner membrane. It catalyses the reaction heme b + (2E,6E)-farnesyl diphosphate + H2O = Fe(II)-heme o + diphosphate. It functions in the pathway porphyrin-containing compound metabolism; heme O biosynthesis; heme O from protoheme: step 1/1. In terms of biological role, converts heme B (protoheme IX) to heme O by substitution of the vinyl group on carbon 2 of heme B porphyrin ring with a hydroxyethyl farnesyl side group. The protein is Protoheme IX farnesyltransferase of Blochmanniella pennsylvanica (strain BPEN).